We begin with the raw amino-acid sequence, 233 residues long: MGQKVHPKIIRLGIIKYWLSTWYANTKEFAENLQGDFKVRQFLTKELSKASISHVVIERPPKSIRVTIYTARPGIVIGKKGEDVEKLRKRVALIAGVPAQINTYEIRKPELDPKLVADGITSQLERRVMFRRAMKRAVQNTMRAGAKGIKVEVSGRLGGAEIARTEWYREGRVPLHTLRADIDYDTSEAHTTYGVIGVKVWIFKGEILGTVLPFKQAEQPKQQQRKGRSKENR.

The KH type-2 domain occupies 39 to 107 (VRQFLTKELS…PAQINTYEIR (69 aa)).

This sequence belongs to the universal ribosomal protein uS3 family. In terms of assembly, part of the 30S ribosomal subunit. Forms a tight complex with proteins S10 and S14.

Its function is as follows. Binds the lower part of the 30S subunit head. Binds mRNA in the 70S ribosome, positioning it for translation. The protein is Small ribosomal subunit protein uS3 of Hamiltonella defensa subsp. Acyrthosiphon pisum (strain 5AT).